Here is a 137-residue protein sequence, read N- to C-terminus: Putative pre-16S rRNA nuclease (137 aa).

The protein belongs to the YqgF nuclease family.

The protein resides in the cytoplasm. Its function is as follows. Could be a nuclease involved in processing of the 5'-end of pre-16S rRNA. The sequence is that of Putative pre-16S rRNA nuclease from Desulforamulus reducens (strain ATCC BAA-1160 / DSM 100696 / MI-1) (Desulfotomaculum reducens).